The sequence spans 302 residues: Methionyl-tRNA formyltransferase (302 aa).

108–111 (SLLP) lines the (6S)-5,6,7,8-tetrahydrofolate pocket. Basic and acidic residues predominate over residues 276–288 (REGKRPMEPEEFL). The tract at residues 276–302 (REGKRPMEPEEFLRGFPLPEGSRAHTA) is disordered.

The protein belongs to the Fmt family.

It carries out the reaction L-methionyl-tRNA(fMet) + (6R)-10-formyltetrahydrofolate = N-formyl-L-methionyl-tRNA(fMet) + (6S)-5,6,7,8-tetrahydrofolate + H(+). Functionally, attaches a formyl group to the free amino group of methionyl-tRNA(fMet). The formyl group appears to play a dual role in the initiator identity of N-formylmethionyl-tRNA by promoting its recognition by IF2 and preventing the misappropriation of this tRNA by the elongation apparatus. The sequence is that of Methionyl-tRNA formyltransferase from Cereibacter sphaeroides (strain KD131 / KCTC 12085) (Rhodobacter sphaeroides).